The chain runs to 143 residues: UPF0201 protein Pars_1985 (143 aa).

It belongs to the UPF0201 family.

This chain is UPF0201 protein Pars_1985, found in Pyrobaculum arsenaticum (strain DSM 13514 / JCM 11321 / PZ6).